Reading from the N-terminus, the 387-residue chain is Eukaryotic translation initiation factor 3 subunit M (387 aa).

The region spanning 181–340 (LSSKVMIELL…RKVHISSTMH (160 aa)) is the PCI domain.

It belongs to the eIF-3 subunit M family. As to quaternary structure, component of the eukaryotic translation initiation factor 3 (eIF-3) complex. The eIF-3 complex interacts with pix.

It localises to the cytoplasm. Its subcellular location is the golgi apparatus. Its function is as follows. Component of the eukaryotic translation initiation factor 3 (eIF-3) complex, which is involved in protein synthesis of a specialized repertoire of mRNAs and, together with other initiation factors, stimulates binding of mRNA and methionyl-tRNAi to the 40S ribosome. The eIF-3 complex specifically targets and initiates translation of a subset of mRNAs involved in cell proliferation. The chain is Eukaryotic translation initiation factor 3 subunit M from Drosophila ananassae (Fruit fly).